We begin with the raw amino-acid sequence, 458 residues long: NADH-ubiquinone oxidoreductase chain 4 (458 aa).

A run of 12 helical transmembrane segments spans residues 21–43 (ASLW…QWLN), 58–78 (IDQI…LMLL), 93–112 (RTFI…AFSA), 116–138 (TLFY…RWGN), 145–165 (AGIY…VTIL), 196–216 (GLAL…HLWL), 224–244 (PIAG…YGIM), 257–277 (LSYP…SICL), 285–305 (LIAY…MIQT), 309–329 (FSGA…LFCL), 341–361 (ILLL…WWLL), and 379–399 (LTIM…TGLA).

This sequence belongs to the complex I subunit 4 family.

The protein localises to the mitochondrion membrane. It carries out the reaction a ubiquinone + NADH + 5 H(+)(in) = a ubiquinol + NAD(+) + 4 H(+)(out). In terms of biological role, core subunit of the mitochondrial membrane respiratory chain NADH dehydrogenase (Complex I) that is believed to belong to the minimal assembly required for catalysis. Complex I functions in the transfer of electrons from NADH to the respiratory chain. The immediate electron acceptor for the enzyme is believed to be ubiquinone. This Struthio camelus (Common ostrich) protein is NADH-ubiquinone oxidoreductase chain 4 (MT-ND4).